The primary structure comprises 226 residues: MQITEIYRSLQGESSYTGIPCIFVRLTACNLRCAWCDSEYTFKGGRKMSEDEIFAEVQKLAPGGLVEITGGEPLLQERELVPFMERLVASGYKVLIETSGERPLANVPQDVVKIVDVKCPASGEGGSFRIENLDALTPHDEIKFVISDRADYEFAREFTRQHGLENKVSSVIFSPAFRKDARGTRDASHCLVDPQDLANWVLEDQLDVRLGLQTHKFIWTPETKGV.

Substrate-binding positions include 10-12 (LQG) and R25. The region spanning 16–221 (YTGIPCIFVR…LQTHKFIWTP (206 aa)) is the Radical SAM core domain. [4Fe-4S] cluster-binding residues include C29, C33, and C36. A Mg(2+)-binding site is contributed by S38. T69 provides a ligand contact to substrate. G71 is a binding site for S-adenosyl-L-methionine.

This sequence belongs to the radical SAM superfamily. 7-carboxy-7-deazaguanine synthase family. As to quaternary structure, homodimer. Requires [4Fe-4S] cluster as cofactor. S-adenosyl-L-methionine is required as a cofactor. Mg(2+) serves as cofactor.

It carries out the reaction 6-carboxy-5,6,7,8-tetrahydropterin + H(+) = 7-carboxy-7-deazaguanine + NH4(+). Its pathway is purine metabolism; 7-cyano-7-deazaguanine biosynthesis. Its function is as follows. Catalyzes the complex heterocyclic radical-mediated conversion of 6-carboxy-5,6,7,8-tetrahydropterin (CPH4) to 7-carboxy-7-deazaguanine (CDG), a step common to the biosynthetic pathways of all 7-deazapurine-containing compounds. The chain is 7-carboxy-7-deazaguanine synthase from Koribacter versatilis (strain Ellin345).